The following is a 107-amino-acid chain: uncharacterized protein (107 aa).

The chain crosses the membrane as a helical span at residues 62 to 79 (LLVVIVYYFSHVGSFSLA).

The protein localises to the nucleus membrane. This is an uncharacterized protein from Schizosaccharomyces pombe (strain 972 / ATCC 24843) (Fission yeast).